The primary structure comprises 343 residues: tRNA N6-adenosine threonylcarbamoyltransferase (343 aa).

Fe cation contacts are provided by His-116 and His-120. Residues 138 to 142 (LVSGG), Asp-172, Gly-185, Asp-189, and Asn-277 contribute to the substrate site. Asp-305 is a binding site for Fe cation.

This sequence belongs to the KAE1 / TsaD family. Fe(2+) serves as cofactor.

Its subcellular location is the cytoplasm. The catalysed reaction is L-threonylcarbamoyladenylate + adenosine(37) in tRNA = N(6)-L-threonylcarbamoyladenosine(37) in tRNA + AMP + H(+). Functionally, required for the formation of a threonylcarbamoyl group on adenosine at position 37 (t(6)A37) in tRNAs that read codons beginning with adenine. Is involved in the transfer of the threonylcarbamoyl moiety of threonylcarbamoyl-AMP (TC-AMP) to the N6 group of A37, together with TsaE and TsaB. TsaD likely plays a direct catalytic role in this reaction. This is tRNA N6-adenosine threonylcarbamoyltransferase from Mycobacterium ulcerans (strain Agy99).